A 60-amino-acid chain; its full sequence is Large ribosomal subunit protein bL32 (60 aa).

Belongs to the bacterial ribosomal protein bL32 family.

This Persephonella marina (strain DSM 14350 / EX-H1) protein is Large ribosomal subunit protein bL32.